Consider the following 200-residue polypeptide: Probable GTP-binding protein EngB (200 aa).

Residues 22 to 195 enclose the EngB-type G domain; it reads GKDEIAFVGR…INNICSGINY (174 aa). GTP contacts are provided by residues 30 to 37, 57 to 61, 75 to 78, 142 to 145, and 174 to 176; these read GRSNVGKS, GKTRL, DLPG, TKSD, and FSS. Ser-37 and Thr-59 together coordinate Mg(2+).

It belongs to the TRAFAC class TrmE-Era-EngA-EngB-Septin-like GTPase superfamily. EngB GTPase family. Mg(2+) serves as cofactor.

Functionally, necessary for normal cell division and for the maintenance of normal septation. In Clostridium acetobutylicum (strain ATCC 824 / DSM 792 / JCM 1419 / IAM 19013 / LMG 5710 / NBRC 13948 / NRRL B-527 / VKM B-1787 / 2291 / W), this protein is Probable GTP-binding protein EngB.